The chain runs to 216 residues: Germin-like protein 1-1 (216 aa).

An N-terminal signal peptide occupies residues 1–24 (MARVQLWVAAACAVVLALAAPSLA). A disulfide bridge links cysteine 34 with cysteine 49. N-linked (GlcNAc...) asparagine glycosylation is found at asparagine 52 and asparagine 76. Positions 61-209 (AGLKNPGNTN…AFRVDVPQVD (149 aa)) constitute a Cupin type-1 domain. Mn(2+) is bound by residues histidine 109, histidine 111, glutamate 116, and histidine 155.

It belongs to the germin family. Oligomer (believed to be a pentamer but probably hexamer).

It localises to the secreted. Its subcellular location is the extracellular space. The protein localises to the apoplast. May play a role in plant defense. Probably has no oxalate oxidase activity even if the active site is conserved. The polypeptide is Germin-like protein 1-1 (GER4) (Oryza sativa subsp. japonica (Rice)).